A 257-amino-acid polypeptide reads, in one-letter code: Phosphonates import ATP-binding protein PhnC (257 aa).

Residues 7 to 251 enclose the ABC transporter domain; the sequence is IQLKDVSKIY…VFTDIYNGGD (245 aa). Position 40-47 (40-47) interacts with ATP; sequence GLSGAGKS.

This sequence belongs to the ABC transporter superfamily. Phosphonates importer (TC 3.A.1.9.1) family. As to quaternary structure, the complex is composed of two ATP-binding proteins (PhnC), two transmembrane proteins (PhnE) and a solute-binding protein (PhnD).

The protein resides in the cell membrane. It catalyses the reaction phosphonate(out) + ATP + H2O = phosphonate(in) + ADP + phosphate + H(+). Part of the ABC transporter complex PhnCDE involved in phosphonates import. Responsible for energy coupling to the transport system. The protein is Phosphonates import ATP-binding protein PhnC of Lactobacillus acidophilus (strain ATCC 700396 / NCK56 / N2 / NCFM).